A 135-amino-acid polypeptide reads, in one-letter code: Small ribosomal subunit protein uS8 (135 aa).

This sequence belongs to the universal ribosomal protein uS8 family. As to quaternary structure, part of the 30S ribosomal subunit. Contacts proteins S5 and S12.

Functionally, one of the primary rRNA binding proteins, it binds directly to 16S rRNA central domain where it helps coordinate assembly of the platform of the 30S subunit. In Nocardioides sp. (strain ATCC BAA-499 / JS614), this protein is Small ribosomal subunit protein uS8.